Here is a 466-residue protein sequence, read N- to C-terminus: Fumarate hydratase class II (466 aa).

Substrate-binding positions include 100-102 (SGT), Arg-128, 131-134 (HPND), 141-143 (STN), and Thr-189. Residue His-190 is the Proton donor/acceptor of the active site. Ser-320 is an active-site residue. Substrate-binding positions include Ser-321 and 326 to 328 (KVN).

The protein belongs to the class-II fumarase/aspartase family. Fumarase subfamily. Homotetramer.

Its subcellular location is the cytoplasm. It catalyses the reaction (S)-malate = fumarate + H2O. It participates in carbohydrate metabolism; tricarboxylic acid cycle; (S)-malate from fumarate: step 1/1. Involved in the TCA cycle. Catalyzes the stereospecific interconversion of fumarate to L-malate. This chain is Fumarate hydratase class II, found in Prochlorococcus marinus (strain MIT 9313).